Reading from the N-terminus, the 273-residue chain is Dermonecrotic toxin LdSicTox-alphaIB3av (273 aa).

The active site involves H5. Mg(2+)-binding residues include E25 and D27. Residue H41 is the Nucleophile of the active site. Cystine bridges form between C45-C51 and C47-C190. Position 85 (D85) interacts with Mg(2+).

The protein belongs to the arthropod phospholipase D family. Class II subfamily. Mg(2+) serves as cofactor. Expressed by the venom gland.

The protein resides in the secreted. The enzyme catalyses an N-(acyl)-sphingosylphosphocholine = an N-(acyl)-sphingosyl-1,3-cyclic phosphate + choline. It carries out the reaction an N-(acyl)-sphingosylphosphoethanolamine = an N-(acyl)-sphingosyl-1,3-cyclic phosphate + ethanolamine. The catalysed reaction is a 1-acyl-sn-glycero-3-phosphocholine = a 1-acyl-sn-glycero-2,3-cyclic phosphate + choline. It catalyses the reaction a 1-acyl-sn-glycero-3-phosphoethanolamine = a 1-acyl-sn-glycero-2,3-cyclic phosphate + ethanolamine. Dermonecrotic toxins cleave the phosphodiester linkage between the phosphate and headgroup of certain phospholipids (sphingolipid and lysolipid substrates), forming an alcohol (often choline) and a cyclic phosphate. This toxin acts on sphingomyelin (SM). It may also act on ceramide phosphoethanolamine (CPE), lysophosphatidylcholine (LPC) and lysophosphatidylethanolamine (LPE), but not on lysophosphatidylserine (LPS), and lysophosphatidylglycerol (LPG). It acts by transphosphatidylation, releasing exclusively cyclic phosphate products as second products. Induces dermonecrosis, hemolysis, increased vascular permeability, edema, inflammatory response, and platelet aggregation. The chain is Dermonecrotic toxin LdSicTox-alphaIB3av from Loxosceles deserta (Desert recluse spider).